Reading from the N-terminus, the 161-residue chain is Phosphopantetheine adenylyltransferase (161 aa).

Substrate is bound at residue threonine 9. Residues threonine 9 to phenylalanine 10 and histidine 17 each bind ATP. Lysine 41, leucine 73, and arginine 87 together coordinate substrate. Residues glycine 88–arginine 90, glutamate 98, and tyrosine 123–threonine 129 contribute to the ATP site.

The protein belongs to the bacterial CoaD family. Homohexamer. The cofactor is Mg(2+).

The protein resides in the cytoplasm. It catalyses the reaction (R)-4'-phosphopantetheine + ATP + H(+) = 3'-dephospho-CoA + diphosphate. Its pathway is cofactor biosynthesis; coenzyme A biosynthesis; CoA from (R)-pantothenate: step 4/5. Functionally, reversibly transfers an adenylyl group from ATP to 4'-phosphopantetheine, yielding dephospho-CoA (dPCoA) and pyrophosphate. In Cupriavidus metallidurans (strain ATCC 43123 / DSM 2839 / NBRC 102507 / CH34) (Ralstonia metallidurans), this protein is Phosphopantetheine adenylyltransferase.